The chain runs to 172 residues: 3-hydroxydecanoyl-[acyl-carrier-protein] dehydratase (172 aa).

The active site involves His-71.

It belongs to the thioester dehydratase family. FabA subfamily. Homodimer.

Its subcellular location is the cytoplasm. The enzyme catalyses a (3R)-hydroxyacyl-[ACP] = a (2E)-enoyl-[ACP] + H2O. It carries out the reaction (3R)-hydroxydecanoyl-[ACP] = (2E)-decenoyl-[ACP] + H2O. The catalysed reaction is (2E)-decenoyl-[ACP] = (3Z)-decenoyl-[ACP]. The protein operates within lipid metabolism; fatty acid biosynthesis. In terms of biological role, necessary for the introduction of cis unsaturation into fatty acids. Catalyzes the dehydration of (3R)-3-hydroxydecanoyl-ACP to E-(2)-decenoyl-ACP and then its isomerization to Z-(3)-decenoyl-ACP. Can catalyze the dehydratase reaction for beta-hydroxyacyl-ACPs with saturated chain lengths up to 16:0, being most active on intermediate chain length. This Salmonella agona (strain SL483) protein is 3-hydroxydecanoyl-[acyl-carrier-protein] dehydratase.